Consider the following 146-residue polypeptide: Hemoglobin subunit beta-2 (146 aa).

Positions 2 to 146 constitute a Globin domain; that stretch reads HWTAEEKQLI…VAHALARRYH (145 aa). Residues H63 and H92 each coordinate heme b.

It belongs to the globin family. In terms of assembly, heterotetramer of two alpha chains and two beta chains. As to expression, red blood cells.

Its function is as follows. Involved in oxygen transport from the lung to the various peripheral tissues. The protein is Hemoglobin subunit beta-2 of Iguana iguana (Common iguana).